A 200-amino-acid polypeptide reads, in one-letter code: LIM domain-containing protein WLIM2a (200 aa).

2 LIM zinc-binding domains span residues 8-68 and 107-167; these read QKCR…LFKE and DKCA…LFKE.

In terms of assembly, interacts with F-actin. As to expression, expressed in roots, leaves, stems, flowers and siliques. Barely detected in pollen.

The protein localises to the cytoplasm. It localises to the cytoskeleton. Functionally, binds to actin filaments and promotes cross-linking into thick bundles. Has an actin-stabilizing activity. The actin regulatory activities are not regulated by pH and [Ca(2+)]. This chain is LIM domain-containing protein WLIM2a, found in Arabidopsis thaliana (Mouse-ear cress).